The following is a 51-amino-acid chain: Lantibiotic flavucin (51 aa).

Residues 1-20 (MSDFTLDFAEGDAADTVSPQ) constitute a propeptide that is removed on maturation. The lanthionine (Ser-Cys) cross-link spans 23-27 (SKSLC). 3 consecutive cross-links (beta-methyllanthionine (Thr-Cys)) follow at residues 28–31 (TPGC), 33–38 (TGWMMC), and 42–45 (TKGC).

It belongs to the type A lantibiotic family. Post-translationally, maturation of lantibiotics involves the enzymatic conversion of Thr, and Ser into dehydrated AA and the formation of thioether bonds with cysteine. This is followed by membrane translocation and cleavage of the modified precursor.

With respect to regulation, antimicrobial activity depends on the dehydration degree and integrity of flavucin. Functionally, lanthionine-containing peptide antibiotic (lantibiotic) active on certain Gram-positive bacteria. The bactericidal activity of lantibiotics is based on depolarization of energized bacterial cytoplasmic membranes, initiated by the formation of aqueous transmembrane pores. Flavucin has high antimicrobial activity against several pathogenic bacteria such as S.aureus, E.faecalis, E.faecium and L.monocytogenes. Is also active against the Gram-negative P.aeruginosa. In Corynebacterium lipophiloflavum (strain ATCC 700352 / DSM 44291 / CCUG 37336 / JCM 10383 / DMMZ 1944), this protein is Lantibiotic flavucin.